Reading from the N-terminus, the 211-residue chain is Protein YCF54, chloroplastic (211 aa).

The transit peptide at 1 to 80 (MWSVTGALTV…GESTKYHFLV (80 aa)) directs the protein to the chloroplast.

The protein belongs to the ycf54 family. As to quaternary structure, interacts with LFNR1 and CRD1/CHL27 in chloroplasts.

It localises to the plastid. The protein localises to the chloroplast. Involved in the biosynthesis of chlorophyll; acts probably as a scaffolding factor in the MgProto monomethylester (MgProtoME) cyclase complex to stabilize CRD1/CHL27, the catalytic subunit which catalyzes the formation of a fifth isocyclic ring to tetrapyrroles to form protochlorophyllide. The protein is Protein YCF54, chloroplastic of Arabidopsis thaliana (Mouse-ear cress).